Here is a 226-residue protein sequence, read N- to C-terminus: RNA-binding protein 24 (226 aa).

Residues 11-88 form the RRM domain; it reads TKIFVGGLPY…RKANVNLAYL (78 aa).

Its subcellular location is the nucleus. The protein resides in the cytoplasm. Multifunctional RNA-binding protein involved in the regulation of pre-mRNA splicing, mRNA stability and mRNA translation important for cell fate decision and differentiation. Plays a major role in pre-mRNA alternative splicing regulation. Mediates preferentially muscle-specific exon inclusion in numerous mRNAs important for striated cardiac and skeletal muscle cell differentiation. Binds to intronic splicing enhancer (ISE) composed of stretches of GU-rich motifs localized in flanking intron of exon that will be included by alternative splicing. Involved in embryonic stem cell (ESC) transition to cardiac cell differentiation by promoting pre-mRNA alternative splicing events of several pluripotency and/or differentiation genes. Plays a role in the regulation of mRNA stability and mRNA translation to which it is bound. Involved in myogenic differentiation by regulating myog levels. Binds to a huge amount of mRNAs. Required for embryonic heart development, sarcomer and M-band formation in striated muscles. In Xenopus tropicalis (Western clawed frog), this protein is RNA-binding protein 24 (rbm24).